We begin with the raw amino-acid sequence, 250 residues long: MICYPIIMNNQLKFSYKYPSLEPGILIKRYKRFLADIELKSGGIITAHCPNTGPMTGVSTPGSNVMVSYSNNPKRKLAYTWELIEVTDNEPTWVGINTALPNRVIKLALAENLFPELGDYYEVKTEVVYGKDRKSRVDFKLISETKNIYLEVKNTTWADGRVALFPDTVTKRGQKHLRELIGVVEQGERAVCLFLINRGDCYQFAPGDVADHDYGKLLREAMIKGVEILPCRFIVTPQEINYLGIAEFIN.

Belongs to the SfsA family.

This Trichodesmium erythraeum (strain IMS101) protein is Sugar fermentation stimulation protein homolog.